Consider the following 451-residue polypeptide: uncharacterized protein (451 aa).

The 176-residue stretch at 29-204 folds into the FAD-binding PCMH-type domain; it reads LERYPDIIVF…TSMTFKAVPI (176 aa). His-66 bears the Pros-8alpha-FAD histidine mark.

Belongs to the oxygen-dependent FAD-linked oxidoreductase family. FAD is required as a cofactor.

This is an uncharacterized protein from Bacillus subtilis (strain 168).